A 334-amino-acid polypeptide reads, in one-letter code: UL-16 binding protein 5 (334 aa).

An N-terminal signal peptide occupies residues 1 to 25; it reads MAAAASPAFLLRLPLLLLLSSWCRT. At 26 to 223 the chain is on the extracellular side; the sequence is GLADPHSLCY…TMSSGTAQPR (198 aa). Residues 29-117 are MHC class I alpha-1 like; that stretch reads DPHSLCYDIT…IQLENYIPKE (89 aa). Cysteine 50 and cysteine 66 are disulfide-bonded. N-linked (GlcNAc...) asparagine glycosylation occurs at asparagine 82. The interval 118–210 is MHC class I alpha-2 like; it reads PLTLQARMSC…MDSTLEPSAG (93 aa). Cysteine 127 and cysteine 190 are disulfide-bonded. Residue glycine 218 is the site of GPI-anchor amidated glycine attachment. Positions 219–334 are cleaved as a propeptide — removed in mature form; the sequence is TAQPRATATT…YSEPLQVSIS (116 aa). The helical transmembrane segment at 224 to 243 threads the bilayer; that stretch reads ATATTLILCCLLIMCLLICS. Residues 244-334 lie on the Cytoplasmic side of the membrane; the sequence is RHSLTQSHGH…YSEPLQVSIS (91 aa).

The protein belongs to the MHC class I family. In terms of assembly, interacts with KLRK1/NKG2D. (Microbial infection) In CMV-infected cells, interacts with the viral glycoprotein UL16; this interaction causes RAET1G retention in the endoplasmic reticulum and cis-Golgi and prevents binding to and activation of KLRK1/NKG2D, providing CMV with an immune evasion mechanism. Post-translationally, the functional form is cleaved C-terminally of the GPI-anchor and yields a 28 kDa protein. In terms of tissue distribution, isoform 1 is highly expressed in colon and in a number of tumor cell lines and highly restricted in normal tissues. Both isoforms are frequently expressed in cell lines derived from epithelial cancers, and in primary breast cancers.

The protein localises to the cell membrane. It localises to the endoplasmic reticulum. It is found in the secreted. In terms of biological role, binds and activates the KLRK1/NKG2D receptor, mediating natural killer cell cytotoxicity. Down-regulates the expression of KLRK1 and stimulates natural killer cells to secrete IFNG. Functionally, stimulates natural killer cells to secrete IFNG. This is UL-16 binding protein 5 from Homo sapiens (Human).